Reading from the N-terminus, the 97-residue chain is Co-chaperonin GroES (97 aa).

This sequence belongs to the GroES chaperonin family. In terms of assembly, heptamer of 7 subunits arranged in a ring. Interacts with the chaperonin GroEL.

The protein resides in the cytoplasm. In terms of biological role, together with the chaperonin GroEL, plays an essential role in assisting protein folding. The GroEL-GroES system forms a nano-cage that allows encapsulation of the non-native substrate proteins and provides a physical environment optimized to promote and accelerate protein folding. GroES binds to the apical surface of the GroEL ring, thereby capping the opening of the GroEL channel. The polypeptide is Co-chaperonin GroES (Burkholderia cepacia (Pseudomonas cepacia)).